A 393-amino-acid polypeptide reads, in one-letter code: DNA-directed RNA polymerase subunit Rpo1C (393 aa).

Belongs to the RNA polymerase beta' chain family. In terms of assembly, part of the RNA polymerase complex.

The protein localises to the cytoplasm. It catalyses the reaction RNA(n) + a ribonucleoside 5'-triphosphate = RNA(n+1) + diphosphate. Its function is as follows. DNA-dependent RNA polymerase (RNAP) catalyzes the transcription of DNA into RNA using the four ribonucleoside triphosphates as substrates. Forms part of the jaw domain. This Thermococcus celer protein is DNA-directed RNA polymerase subunit Rpo1C.